A 346-amino-acid polypeptide reads, in one-letter code: MEVKVSGITKQFDRFPALNDVSLDIRSGELIALLGPSGSGKTTLLRLIAGLEQPTQGQIFFGDEDASHRTVQERNVGFVFQHYALFRHMTVADNIAFGLKVRPSASRPPKAEIRRRVSELLDMVHLTGLEKRYPTQLSGGQRQRVALARAVAIEPKVLLLDEPFGALDAKVRKELRRWLREFHDRTGHTTVFVTHDQEEALELADRVVVMSQGKIEQVGTADDVYDTPNSPFVFSFIGESSSLPVTIRDGHVLFQGESIGINEGGTGEGELFFRPEDVVLTDEKDALYGKVTTCRRLAGTRIAEIDIANNGHEPYHLEIEVPLNAAVAVGAELRFRPTRWKVFGKK.

In terms of domain architecture, ABC transporter spans 3–237; that stretch reads VKVSGITKQF…PNSPFVFSFI (235 aa). Residue 35 to 42 participates in ATP binding; sequence GPSGSGKT.

Belongs to the ABC transporter superfamily. Sulfate/tungstate importer (TC 3.A.1.6) family. As to quaternary structure, the complex is composed of two ATP-binding proteins (CysA), two transmembrane proteins (CysT and CysW) and a solute-binding protein (CysP).

The protein resides in the cell inner membrane. It catalyses the reaction sulfate(out) + ATP + H2O = sulfate(in) + ADP + phosphate + H(+). It carries out the reaction thiosulfate(out) + ATP + H2O = thiosulfate(in) + ADP + phosphate + H(+). In terms of biological role, part of the ABC transporter complex CysAWTP involved in sulfate/thiosulfate import. Responsible for energy coupling to the transport system. This chain is Sulfate/thiosulfate import ATP-binding protein CysA 1, found in Agrobacterium fabrum (strain C58 / ATCC 33970) (Agrobacterium tumefaciens (strain C58)).